A 226-amino-acid chain; its full sequence is Orotidine 5'-phosphate decarboxylase (226 aa).

Residues D8, K30, 58–67 (DLKIHDIPNT), T117, R177, Q186, G206, and R207 contribute to the substrate site. K60 serves as the catalytic Proton donor.

It belongs to the OMP decarboxylase family. Type 1 subfamily. Homodimer.

It carries out the reaction orotidine 5'-phosphate + H(+) = UMP + CO2. The protein operates within pyrimidine metabolism; UMP biosynthesis via de novo pathway; UMP from orotate: step 2/2. In terms of biological role, catalyzes the decarboxylation of orotidine 5'-monophosphate (OMP) to uridine 5'-monophosphate (UMP). The protein is Orotidine 5'-phosphate decarboxylase of Campylobacter jejuni subsp. doylei (strain ATCC BAA-1458 / RM4099 / 269.97).